Consider the following 141-residue polypeptide: uncharacterized protein (141 aa).

Residues K24 to T52 are a coiled coil.

This is an uncharacterized protein from Invertebrate iridescent virus 6 (IIV-6).